We begin with the raw amino-acid sequence, 157 residues long: Probable calcium-binding protein CML23 (157 aa).

EF-hand domains lie at 11 to 46 (GSME…LSPN), 47 to 82 (ASQE…SDQS), 86 to 121 (SAIR…LGEK), and 122 to 157 (CSIQ…NGSA). Ca(2+) contacts are provided by D24, N26, D28, K30, E35, D60, D62, N64, E71, D99, D101, N103, R105, E110, D135, D137, D139, C141, and E146.

Functionally, potential calcium sensor. This chain is Probable calcium-binding protein CML23 (CML23), found in Arabidopsis thaliana (Mouse-ear cress).